A 295-amino-acid polypeptide reads, in one-letter code: Protease HtpX (295 aa).

2 consecutive transmembrane segments (helical) span residues I4–L24 and Q42–S62. H147 serves as a coordination point for Zn(2+). E148 is a catalytic residue. Position 151 (H151) interacts with Zn(2+). A run of 2 helical transmembrane segments spans residues V158 to I178 and V199 to F219. E224 contacts Zn(2+).

The protein belongs to the peptidase M48B family. Zn(2+) serves as cofactor.

It is found in the cell inner membrane. This chain is Protease HtpX, found in Pseudomonas fluorescens (strain ATCC BAA-477 / NRRL B-23932 / Pf-5).